We begin with the raw amino-acid sequence, 166 residues long: Large ribosomal subunit protein uL10 (166 aa).

This sequence belongs to the universal ribosomal protein uL10 family. In terms of assembly, part of the ribosomal stalk of the 50S ribosomal subunit. The N-terminus interacts with L11 and the large rRNA to form the base of the stalk. The C-terminus forms an elongated spine to which L12 dimers bind in a sequential fashion forming a multimeric L10(L12)X complex.

Functionally, forms part of the ribosomal stalk, playing a central role in the interaction of the ribosome with GTP-bound translation factors. The sequence is that of Large ribosomal subunit protein uL10 from Shewanella woodyi (strain ATCC 51908 / MS32).